The following is a 363-amino-acid chain: S-adenosylmethionine:tRNA ribosyltransferase-isomerase (363 aa).

Belongs to the QueA family. Monomer.

It localises to the cytoplasm. The catalysed reaction is 7-aminomethyl-7-carbaguanosine(34) in tRNA + S-adenosyl-L-methionine = epoxyqueuosine(34) in tRNA + adenine + L-methionine + 2 H(+). It functions in the pathway tRNA modification; tRNA-queuosine biosynthesis. Transfers and isomerizes the ribose moiety from AdoMet to the 7-aminomethyl group of 7-deazaguanine (preQ1-tRNA) to give epoxyqueuosine (oQ-tRNA). The sequence is that of S-adenosylmethionine:tRNA ribosyltransferase-isomerase from Brucella abortus (strain S19).